The chain runs to 545 residues: CTP synthase (545 aa).

The interval 1-265 (MTKYIFITGG…DEIVVKKLSL (265 aa)) is amidoligase domain. Ser13 lines the CTP pocket. A UTP-binding site is contributed by Ser13. ATP is bound by residues 14–19 (SLGKGI) and Asp71. Mg(2+)-binding residues include Asp71 and Glu139. Residues 146–148 (DIE), 186–191 (KTKPTQ), and Lys222 each bind CTP. UTP contacts are provided by residues 186–191 (KTKPTQ) and Lys222. One can recognise a Glutamine amidotransferase type-1 domain in the interval 290–541 (KIAMVGKYTE…VLAARIHHQE (252 aa)). Gly351 contributes to the L-glutamine binding site. The Nucleophile; for glutamine hydrolysis role is filled by Cys378. Residues 379 to 382 (LGMQ), Glu402, and Arg469 each bind L-glutamine. Residues His514 and Glu516 contribute to the active site.

It belongs to the CTP synthase family. Homotetramer.

It carries out the reaction UTP + L-glutamine + ATP + H2O = CTP + L-glutamate + ADP + phosphate + 2 H(+). The enzyme catalyses L-glutamine + H2O = L-glutamate + NH4(+). It catalyses the reaction UTP + NH4(+) + ATP = CTP + ADP + phosphate + 2 H(+). Its pathway is pyrimidine metabolism; CTP biosynthesis via de novo pathway; CTP from UDP: step 2/2. Allosterically activated by GTP, when glutamine is the substrate; GTP has no effect on the reaction when ammonia is the substrate. The allosteric effector GTP functions by stabilizing the protein conformation that binds the tetrahedral intermediate(s) formed during glutamine hydrolysis. Inhibited by the product CTP, via allosteric rather than competitive inhibition. In terms of biological role, catalyzes the ATP-dependent amination of UTP to CTP with either L-glutamine or ammonia as the source of nitrogen. Regulates intracellular CTP levels through interactions with the four ribonucleotide triphosphates. In Legionella pneumophila (strain Corby), this protein is CTP synthase.